The primary structure comprises 441 residues: Probable xylan O-acetyltransferase 10 (441 aa).

Topologically, residues M1–S19 are cytoplasmic. The helical; Signal-anchor for type II membrane protein transmembrane segment at P20–F40 threads the bilayer. Over K41–P441 the chain is Lumenal. A disordered region spans residues P50 to G81. The segment covering P56 to G73 has biased composition (basic residues). 4 disulfides stabilise this stretch: C97/C148, C119/C184, C128/C422, and C341/C418. The N-linked (GlcNAc...) asparagine glycan is linked to N154. The GDS motif motif lies at G171–S173. S173 (nucleophile) is an active-site residue. N-linked (GlcNAc...) asparagine glycosylation is found at N212, N343, and N381. The active-site Proton donor is the D417. The DXXH motif motif lies at D417 to H420. H420 serves as the catalytic Proton acceptor.

This sequence belongs to the PC-esterase family. TBL subfamily. As to expression, expressed in roots, leaves and stems.

The protein resides in the golgi apparatus membrane. Its function is as follows. Probable xylan acetyltransferase required for 2-O- and 3-O-monoacetylation of xylosyl residues in xylan. Possesses extremely low activity in vitro. This is Probable xylan O-acetyltransferase 10 from Oryza sativa subsp. japonica (Rice).